A 272-amino-acid chain; its full sequence is Cholesterol 25-hydroxylase (272 aa).

The N-linked (GlcNAc...) asparagine glycan is linked to Asn-5. A run of 3 helical transmembrane segments spans residues 38 to 58 (FFPVIFSITTYVGFCLPFVVL), 84 to 104 (LLPCLGQTLYQHVMFVFPVTL), and 121 to 141 (LLLLLHHILFCLLLFDMEFFV). The Fatty acid hydroxylase domain maps to 129–263 (LFCLLLFDME…FTHWDKILGT (135 aa)). The Histidine box-1 signature appears at 142–146 (WHLLH). The short motif at 157–161 (HKVHH) is the Histidine box-2 element. N-linked (GlcNAc...) asparagine glycosylation is found at Asn-163 and Asn-189. Residues 238-244 (HHDLHHS) carry the Histidine box-3 motif.

The protein belongs to the sterol desaturase family. The cofactor is Fe cation. N-glycosylated.

It is found in the endoplasmic reticulum membrane. It catalyses the reaction cholesterol + AH2 + O2 = 25-hydroxycholesterol + A + H2O. The enzyme catalyses cholesterol + NADPH + O2 + H(+) = 25-hydroxycholesterol + NADP(+) + H2O. Its function is as follows. Catalyzes the formation of 25-hydroxycholesterol from cholesterol, leading to repress cholesterol biosynthetic enzymes. Plays a key role in cell positioning and movement in lymphoid tissues: 25-hydroxycholesterol is an intermediate in biosynthesis of 7-alpha,25-dihydroxycholesterol (7-alpha,25-OHC), an oxysterol that acts as a ligand for the G protein-coupled receptor GPR183/EBI2, a chemotactic receptor for a number of lymphoid cells. May play an important role in regulating lipid metabolism by synthesizing a corepressor that blocks sterol regulatory element binding protein (SREBP) processing. As an interferon-stimulated gene, has broad antiviral activities against a wide range of enveloped viruses, such as vesicular stomatitis virus (VSV) and SARS coronavirus-2 (SARS-CoV-2). Its product, 25-hydroxycholesterol, activates the ER-localized enzyme ACAT to induce internalization of accessible cholesterol on the plasma membrane and restricts SARS-CoV-2 S protein-mediated fusion which inhibits virus replication. In testis, production of 25-hydroxycholesterol by macrophages plays a role in Leydig cell differentiation. Required to restrain inflammation in macrophages: production of 25-hydroxycholesterol protects macrophages from cholesterol overload, thereby preventing mitochondrial DNA release and subsequent activation of the AIM2 inflammasome. The chain is Cholesterol 25-hydroxylase from Homo sapiens (Human).